The primary structure comprises 475 residues: Protein transport protein Sec61 subunit alpha (475 aa).

The Cytoplasmic portion of the chain corresponds to 1-32; it reads MGFRFLDIVKPFTSLVPEVGQPDRKIPFREKV. A helical transmembrane segment spans residues 33 to 53; it reads LWTAICLFIFLVCSQIPLYGI. Residues 54–75 are Lumenal-facing; it reads RSTDSSDPFYWAKVIMASNRGT. Residues 76–96 form a helical membrane-spanning segment; it reads LMELGISPIVTSGMVMQLLAG. The Cytoplasmic portion of the chain corresponds to 97–118; sequence AKLIEIDQSVKADRDLFSAAQK. The helical transmembrane segment at 119-139 threads the bilayer; it reads LFGMLICVGQGVAYIWSGSYG. The Lumenal portion of the chain corresponds to 140–145; the sequence is DPAVLG. A helical transmembrane segment spans residues 146-166; sequence FGNCFLIVLQLFFAGIIVMLL. Topologically, residues 167–173 are cytoplasmic; that stretch reads DELLQKG. A helical transmembrane segment spans residues 174–194; that stretch reads YGIGSGISLFIATNICETIVW. Residues 195–241 lie on the Lumenal side of the membrane; the sequence is KTFSPTTVSVGKGTEFEGAVIALFHLLLTRNDKVRALKEAFYRQNLP. Residues 242-262 traverse the membrane as a helical segment; the sequence is NITNLLATVLIFMVVIYFQGF. At 263-289 the chain is on the cytoplasmic side; that stretch reads RVDLPVKSTRVSGQQGTYPIKLFYTSN. The helical transmembrane segment at 290–310 threads the bilayer; the sequence is IPIILQSALVSNLYFISQLLY. Residues 311 to 353 lie on the Lumenal side of the membrane; that stretch reads RRFPDNILVNLFGAWRTSEYSQQMIPVSGLTYYISSPNNMSAV. Residues 354–374 form a helical membrane-spanning segment; sequence LADPFHALFYITFMLTSCALF. Residues 375–411 lie on the Cytoplasmic side of the membrane; that stretch reads SKVWIEVSGSSARDVAKQLKDQQMTMKGHRDTSVIKE. The helical transmembrane segment at 412-434 threads the bilayer; the sequence is LNRYIPTAAAFGGLCIGALTVVA. Over 435–440 the chain is Lumenal; the sequence is DFMGAI. A helical membrane pass occupies residues 441 to 461; it reads GSGTGILLAVTIIYQYFETFV. Over 462–475 the chain is Cytoplasmic; sequence KEQQELSGGIGGLF.

The protein belongs to the SecY/SEC61-alpha family. As to quaternary structure, heterotrimeric complex composed of SEC61-alpha, SEC61-beta and SEC61-gamma.

The protein localises to the endoplasmic reticulum membrane. Functionally, appears to play a crucial role in the insertion of secretory and membrane polypeptides into the ER. It is required for assembly of membrane and secretory proteins. Found to be tightly associated with membrane-bound ribosomes, either directly or through adaptor proteins. The protein is Protein transport protein Sec61 subunit alpha (sec61a) of Dictyostelium discoideum (Social amoeba).